The chain runs to 565 residues: Oxygen-dependent choline dehydrogenase (565 aa).

Residue 6–35 participates in FAD binding; it reads DYIIVGAGSAGNTLATRLTEDAGVTVLLLE. His-475 functions as the Proton acceptor in the catalytic mechanism.

It belongs to the GMC oxidoreductase family. FAD serves as cofactor.

The enzyme catalyses choline + A = betaine aldehyde + AH2. It catalyses the reaction betaine aldehyde + NAD(+) + H2O = glycine betaine + NADH + 2 H(+). It participates in amine and polyamine biosynthesis; betaine biosynthesis via choline pathway; betaine aldehyde from choline (cytochrome c reductase route): step 1/1. In terms of biological role, involved in the biosynthesis of the osmoprotectant glycine betaine. Catalyzes the oxidation of choline to betaine aldehyde and betaine aldehyde to glycine betaine at the same rate. The chain is Oxygen-dependent choline dehydrogenase from Pseudomonas putida (strain ATCC 700007 / DSM 6899 / JCM 31910 / BCRC 17059 / LMG 24140 / F1).